Here is a 107-residue protein sequence, read N- to C-terminus: Putative double-stranded DNA mimic protein CGSHiGG_01135 (107 aa).

Belongs to the putative dsDNA mimic protein family.

Functionally, may act as a double-stranded DNA (dsDNA) mimic. Probably regulates the activity of a dsDNA-binding protein. This chain is Putative double-stranded DNA mimic protein CGSHiGG_01135, found in Haemophilus influenzae (strain PittGG).